The following is a 382-amino-acid chain: Galactokinase (382 aa).

34 to 37 contributes to the substrate binding site; it reads EHTD. 124-130 contributes to the ATP binding site; the sequence is GAGLSSS. Residues serine 130 and glutamate 162 each coordinate Mg(2+). The active-site Proton acceptor is aspartate 174. Tyrosine 223 lines the substrate pocket.

The protein belongs to the GHMP kinase family. GalK subfamily.

It is found in the cytoplasm. The catalysed reaction is alpha-D-galactose + ATP = alpha-D-galactose 1-phosphate + ADP + H(+). The protein operates within carbohydrate metabolism; galactose metabolism. Functionally, catalyzes the transfer of the gamma-phosphate of ATP to D-galactose to form alpha-D-galactose-1-phosphate (Gal-1-P). The protein is Galactokinase of Escherichia coli O127:H6 (strain E2348/69 / EPEC).